Here is a 292-residue protein sequence, read N- to C-terminus: ATP phosphoribosyltransferase (292 aa).

It belongs to the ATP phosphoribosyltransferase family. Long subfamily. It depends on Mg(2+) as a cofactor.

It is found in the cytoplasm. It carries out the reaction 1-(5-phospho-beta-D-ribosyl)-ATP + diphosphate = 5-phospho-alpha-D-ribose 1-diphosphate + ATP. It functions in the pathway amino-acid biosynthesis; L-histidine biosynthesis; L-histidine from 5-phospho-alpha-D-ribose 1-diphosphate: step 1/9. With respect to regulation, feedback inhibited by histidine. Catalyzes the condensation of ATP and 5-phosphoribose 1-diphosphate to form N'-(5'-phosphoribosyl)-ATP (PR-ATP). Has a crucial role in the pathway because the rate of histidine biosynthesis seems to be controlled primarily by regulation of HisG enzymatic activity. This Thermodesulfovibrio yellowstonii (strain ATCC 51303 / DSM 11347 / YP87) protein is ATP phosphoribosyltransferase.